A 274-amino-acid chain; its full sequence is 4-diphosphocytidyl-2-C-methyl-D-erythritol kinase (274 aa).

The active site involves Lys9. An ATP-binding site is contributed by 91-101 (PAGAGLGGGSS). Residue Asp133 is part of the active site.

Belongs to the GHMP kinase family. IspE subfamily.

It carries out the reaction 4-CDP-2-C-methyl-D-erythritol + ATP = 4-CDP-2-C-methyl-D-erythritol 2-phosphate + ADP + H(+). It participates in isoprenoid biosynthesis; isopentenyl diphosphate biosynthesis via DXP pathway; isopentenyl diphosphate from 1-deoxy-D-xylulose 5-phosphate: step 3/6. Its function is as follows. Catalyzes the phosphorylation of the position 2 hydroxy group of 4-diphosphocytidyl-2C-methyl-D-erythritol. The protein is 4-diphosphocytidyl-2-C-methyl-D-erythritol kinase of Persephonella marina (strain DSM 14350 / EX-H1).